The sequence spans 281 residues: MILIDGKKIAAELREQLRQEVVELKAKHNKIPGLTVILIGEMAPSQIYVRMKEKAANEVGLKSEVIRYPEAVEEKTVLDKIEELNKDESISGILVQLPLPKHIDKQKVIETILPGKDVDGFHPMNVGNLSSGYESSVPCTPLGCYLMIKKIEPNLSGKKAVMIGRSNLNGKPMAQLLLKENCTVTITHSKTKDLKAECLEADIIVAAVGIPELVKADWVKKDAIVIDVGINKTENGIVGDVAFEEVSKVARALTPVPGGVGPMTIACLLKNTIECFKRSQK.

NADP(+) is bound by residues 164–166, serine 189, and isoleucine 230; that span reads GRS.

The protein belongs to the tetrahydrofolate dehydrogenase/cyclohydrolase family. As to quaternary structure, homodimer.

It catalyses the reaction (6R)-5,10-methylene-5,6,7,8-tetrahydrofolate + NADP(+) = (6R)-5,10-methenyltetrahydrofolate + NADPH. The enzyme catalyses (6R)-5,10-methenyltetrahydrofolate + H2O = (6R)-10-formyltetrahydrofolate + H(+). The protein operates within one-carbon metabolism; tetrahydrofolate interconversion. Its function is as follows. Catalyzes the oxidation of 5,10-methylenetetrahydrofolate to 5,10-methenyltetrahydrofolate and then the hydrolysis of 5,10-methenyltetrahydrofolate to 10-formyltetrahydrofolate. This chain is Bifunctional protein FolD, found in Pelagibacter ubique (strain HTCC1062).